A 455-amino-acid polypeptide reads, in one-letter code: MQAATETIVAIATAQGRGGVGIVRISGPLAGQIAVAVSGRQLKARHAHYGPFLDAGGQVIDEGLSLYFPGPNSFTGEDVLELQGHGGPVVLDLLVQRCLELGARQARPGEFSERAFLNDKLDLAQAEAIADLIEASSEQAARNALRSLQGEFSRRVHALTEQLISLRIYVEAAIDFPEEEIDFLADGHVLGLLEKVRTELSTVQREASQGALLRDGMTVVIAGRPNAGKSSLLNALAGREAAIVTDIAGTTRDVLREHIHIDGMPLHVVDTAGLRDTEDHVEKIGVERALKAIGEADRVLLVVDATAPEAADPFSLWPEFLDQRPEPGKVTLIRNKADLSTESIGLEESADGHVTITLSARTGAGLELLREHLKACMGFEQTAESGFSARRRHLEALRQAGQALEHGHSQLIHNGAGELLAEDLRQAQQHLGEITGAFTPDDLLGRIFSSFCIGK.

Positions 24, 81, and 120 each coordinate (6S)-5-formyl-5,6,7,8-tetrahydrofolate. In terms of domain architecture, TrmE-type G spans 216–378 (GMTVVIAGRP…LREHLKACMG (163 aa)). Position 226 (N226) interacts with K(+). Residues 226-231 (NAGKSS), 245-251 (TDIAGTT), 270-273 (DTAG), 335-338 (NKAD), and 359-361 (SAR) each bind GTP. Residue S230 participates in Mg(2+) binding. K(+)-binding residues include T245, I247, and T250. T251 lines the Mg(2+) pocket. Position 455 (K455) interacts with (6S)-5-formyl-5,6,7,8-tetrahydrofolate.

The protein belongs to the TRAFAC class TrmE-Era-EngA-EngB-Septin-like GTPase superfamily. TrmE GTPase family. Homodimer. Heterotetramer of two MnmE and two MnmG subunits. K(+) serves as cofactor.

The protein resides in the cytoplasm. Exhibits a very high intrinsic GTPase hydrolysis rate. Involved in the addition of a carboxymethylaminomethyl (cmnm) group at the wobble position (U34) of certain tRNAs, forming tRNA-cmnm(5)s(2)U34. The protein is tRNA modification GTPase MnmE of Pseudomonas aeruginosa (strain UCBPP-PA14).